The chain runs to 684 residues: Glycine--tRNA ligase beta subunit (684 aa).

The protein belongs to the class-II aminoacyl-tRNA synthetase family. Tetramer of two alpha and two beta subunits.

It localises to the cytoplasm. It catalyses the reaction tRNA(Gly) + glycine + ATP = glycyl-tRNA(Gly) + AMP + diphosphate. The polypeptide is Glycine--tRNA ligase beta subunit (Pseudomonas aeruginosa (strain UCBPP-PA14)).